The chain runs to 355 residues: UDP-3-O-acylglucosamine N-acyltransferase (355 aa).

The active-site Proton acceptor is the H248.

It belongs to the transferase hexapeptide repeat family. LpxD subfamily. As to quaternary structure, homotrimer.

It carries out the reaction a UDP-3-O-[(3R)-3-hydroxyacyl]-alpha-D-glucosamine + a (3R)-hydroxyacyl-[ACP] = a UDP-2-N,3-O-bis[(3R)-3-hydroxyacyl]-alpha-D-glucosamine + holo-[ACP] + H(+). It participates in bacterial outer membrane biogenesis; LPS lipid A biosynthesis. In terms of biological role, catalyzes the N-acylation of UDP-3-O-acylglucosamine using 3-hydroxyacyl-ACP as the acyl donor. Is involved in the biosynthesis of lipid A, a phosphorylated glycolipid that anchors the lipopolysaccharide to the outer membrane of the cell. The protein is UDP-3-O-acylglucosamine N-acyltransferase of Synechococcus elongatus (strain ATCC 33912 / PCC 7942 / FACHB-805) (Anacystis nidulans R2).